We begin with the raw amino-acid sequence, 2167 residues long: RNA editing associated helicase 2 (2167 aa).

The N-terminal 30 residues, 1-30 (MRAIRLTVACRYLGPFRSVTLSPVVLPVRL), are a transit peptide targeting the mitochondrion. Disordered regions lie at residues 503-593 (RARG…DEAT) and 937-969 (ENATKPPHTPTPLPLTLGTTQEKPQYPTPPTNV). Positions 532–541 (SSTQTPSSST) are enriched in low complexity. Residues 1024–1095 (DAKTVLQRYC…AMHALALLRR (72 aa)) form the DRBM domain. The region spanning 1348–1513 (LRAISSNQIV…FGNAPIINVE (166 aa)) is the Helicase ATP-binding domain. 1361–1368 (GTTGCGKT) serves as a coordination point for ATP. The short motif at 1366–1367 (GK) is the Important for binding to gRNA element. The DEAH box signature appears at 1460–1463 (DEIH). One can recognise a Helicase C-terminal domain in the interval 1585 to 1762 (AIDHAVRSLD…SLCLQILALD (178 aa)). The tract at residues 2132–2167 (IIEPCTEPKGGSSEAEKTHVNSSHTPTTSAEAGGDS) is disordered. Polar residues predominate over residues 2151-2161 (VNSSHTPTTSA).

It belongs to the DEAD box helicase family. DEAH subfamily. In terms of assembly, component of the REH2-associated complex (REH2C) composed of helicase REH2, associated factors H2F1 and H2F2, and mRNAs at various editing stages; the formation of the complex is RNA-independent. Within the complex, interacts with H2F1; the interaction is direct. Interacts transiently, in a RNA-dependent manner, with various editing complexes including the RNA editing core (RECC) complex, the gRNA-binding (GRBC) complex (also known as the MRB1 complex) and the RNA editing mediator (REMC) complex. Interacts with GAP1/GRBC2 via RNA forming a variant of the GRBC complex known as REH2-GRBC complex. Interacts with mitochondrial ribosomes.

It localises to the mitochondrion. The catalysed reaction is ATP + H2O = ADP + phosphate + H(+). Functionally, ATP-dependent RNA helicase that unwinds RNA in a 3' to 5' direction and that plays an important role in mitochondrial mRNA editing, a process involving the addition and deletion of uridine (U) nucleotides in the pre-mRNA. As part of the RET2-containing gRNA-binding (RET2-GRBC) complex, acts as a scaffold for the assembly of mRNA-gRNA hybrids and the recruitment of the RNA editing core (RECC) complex. Regulates several steps of mRNA editing by the MRBC3010/GRBC6 containing gRNA-binding (MRBC3010-GRBC) complex including loading of unedited mRNA, editing in the first sequence block and subsequent editing progression across multiple sequence blocks. Also, regulates the RNA substrate content of the MRBC3010-GRBC complex as well as the association of this complex with mitoribosomes. The sequence is that of RNA editing associated helicase 2 from Trypanosoma brucei brucei (strain 927/4 GUTat10.1).